A 413-amino-acid polypeptide reads, in one-letter code: 3-isopropylmalate dehydratase large subunit (413 aa).

Cysteine 293, cysteine 353, and cysteine 356 together coordinate [4Fe-4S] cluster.

This sequence belongs to the aconitase/IPM isomerase family. LeuC type 2 subfamily. In terms of assembly, heterodimer of LeuC and LeuD. [4Fe-4S] cluster serves as cofactor.

It carries out the reaction (2R,3S)-3-isopropylmalate = (2S)-2-isopropylmalate. It functions in the pathway amino-acid biosynthesis; L-leucine biosynthesis; L-leucine from 3-methyl-2-oxobutanoate: step 2/4. In terms of biological role, catalyzes the isomerization between 2-isopropylmalate and 3-isopropylmalate, via the formation of 2-isopropylmaleate. This is 3-isopropylmalate dehydratase large subunit from Picrophilus torridus (strain ATCC 700027 / DSM 9790 / JCM 10055 / NBRC 100828 / KAW 2/3).